Reading from the N-terminus, the 540-residue chain is Early growth response protein 1 (540 aa).

Disordered stretches follow at residues 1–105 (MAAA…AESF) and 162–240 (VSMT…PAYP). Residues 64–75 (SSGGGGGGGGGS) are compositionally biased toward gly residues. Over residues 167–190 (PPATSSSASSPAASSSASQSPPLS) the composition is skewed to low complexity. Polar residues predominate over residues 192–201 (AVQSNDSSPI). A Glycyl lysine isopeptide (Lys-Gly) (interchain with G-Cter in SUMO2) cross-link involves residue Lys-304. A disordered region spans residues 317–337 (PSRMRKYPNRPSKTPPHERPY). A C2H2-type 1 zinc finger spans residues 337–361 (YACPVESCDRRFSRSDELTRHIRIH). The C2H2-type 2; degenerate zinc-finger motif lies at 366–388 (PQCRISMRNFSRSDHLTTHIRTH). Residues 394–416 (FACDICGRKFARSDERKRHTKIH) form a C2H2-type 3 zinc finger. The tract at residues 407-482 (DERKRHTKIH…SPGSSTYPSP (76 aa)) is disordered. The segment covering 411–421 (RHTKIHLRQKD) has biased composition (basic residues). The segment covering 427-482 (SAASAATSSLPSYPSPVATSYPSPATTSYPSPATTSYPSPVPTSYSSPGSSTYPSP) has biased composition (low complexity).

The protein belongs to the EGR C2H2-type zinc-finger protein family. As to quaternary structure, interacts with SNAI1 and SP1 upon 12-O-tetradecanoylphorbol-13-acetate (TPA) induction.

It is found in the nucleus. Its subcellular location is the cytoplasm. Transcriptional regulator. Recognizes and binds to the DNA sequence 5'-GCG(T/G)GGGCG-3'(EGR-site) in the promoter region of target genes. Binds double-stranded target DNA, irrespective of the cytosine methylation status. Regulates the transcription of numerous target genes, and thereby plays an important role in regulating the response to growth factors, DNA damage, and ischemia. Plays a role in the regulation of cell survival, proliferation and cell death. Activates expression of p53/TP53 and TGFB1, and thereby helps prevent tumor formation. Required for normal progress through mitosis and normal proliferation of hepatocytes after partial hepatectomy. Mediates responses to ischemia and hypoxia; regulates the expression of proteins such as IL1B and CXCL2 that are involved in inflammatory processes and development of tissue damage after ischemia. Regulates biosynthesis of luteinizing hormone (LHB) in the pituitary. Regulates the amplitude of the expression rhythms of clock genes: BMAL1, PER2 and NR1D1 in the liver via the activation of PER1 (clock repressor) transcription. Regulates the rhythmic expression of core-clock gene BMAL1 in the suprachiasmatic nucleus (SCN). The chain is Early growth response protein 1 (EGR1) from Bos taurus (Bovine).